A 238-amino-acid polypeptide reads, in one-letter code: 2,3,4,5-tetrahydropyridine-2,6-dicarboxylate N-acetyltransferase (238 aa).

This sequence belongs to the transferase hexapeptide repeat family. DapH subfamily.

It carries out the reaction (S)-2,3,4,5-tetrahydrodipicolinate + acetyl-CoA + H2O = L-2-acetamido-6-oxoheptanedioate + CoA. The protein operates within amino-acid biosynthesis; L-lysine biosynthesis via DAP pathway; LL-2,6-diaminopimelate from (S)-tetrahydrodipicolinate (acetylase route): step 1/3. In terms of biological role, catalyzes the transfer of an acetyl group from acetyl-CoA to tetrahydrodipicolinate. This chain is 2,3,4,5-tetrahydropyridine-2,6-dicarboxylate N-acetyltransferase, found in Pseudothermotoga lettingae (strain ATCC BAA-301 / DSM 14385 / NBRC 107922 / TMO) (Thermotoga lettingae).